Here is a 444-residue protein sequence, read N- to C-terminus: NADH-dependent flavin oxidoreductase nadA (444 aa).

Residues 37 to 40 (ERMC) and Gln123 each bind FMN. The tract at residues 127–149 (PGRQTPSHRQPEPISASDVPLDT) is disordered. 192-195 (HAAH) contacts substrate. Residue 345 to 346 (AR) participates in FMN binding.

This sequence belongs to the NADH:flavin oxidoreductase/NADH oxidase family.

It is found in the cytoplasm. The protein localises to the cytosol. In terms of biological role, NADH-dependent flavin oxidoreductase; part of the gene cluster that mediates the biosynthesis of aflatoxins, a group of polyketide-derived furanocoumarins, and part of the most toxic and carcinogenic compounds among the known mycotoxins. The four major aflatoxins produced by A.parasiticus are aflatoxin B1 (AFB1), aflatoxin B2 (AFB2), aflatoxin G1 (AFG1) and aflatoxin G2 (AFG2). Within the aflatoxin pathway, the NADH-dependent flavin oxidoreductase nadA is specifically required for the last steps in which OMST is converted specifically to aflatoxin G1. The biosynthesis of aflatoxins begins with the norsolorinic acid synthase aflC that combines a hexanoyl starter unit produced by the fatty acid synthase aflA/aflB and 7 malonyl-CoA extender units to synthesize the precursor NOR. The second step is the conversion of NOR to averantin and requires the norsolorinic acid ketoreductase aflD, which catalyzes the dehydration of norsolorinic acid to form (1'S)-averantin. The norsolorinic acid reductases aflE and aflF may also play a role in the conversion of NOR to AVN. The cytochrome P450 monooxygenase aflG then catalyzes the hydroxylation of AVN to 5'hydroxyaverantin (HAVN). The next step is performed by the 5'-hydroxyaverantin dehydrogenase aflH that transforms HAVN to 5'-oxoaverantin (OAVN) which is further converted to averufin (AVF) by aflK that plays a dual role in the pathway, as a 5'-oxoaverantin cyclase that mediates conversion of 5'-oxoaverantin, as well as a versicolorin B synthase in a later step in the pathway. The averufin oxidase aflI catalyzes the conversion of AVF to versiconal hemiacetal acetate (VHA). VHA is then the substrate for the versiconal hemiacetal acetate esterase aflJ to yield versiconal (VAL). Versicolorin B synthase aflK then converts VAL to versicolorin B (VERB) by closing the bisfuran ring of aflatoxin which is required for DNA-binding, thus giving to aflatoxin its activity as a mutagen. Then, the activity of the versicolorin B desaturase aflL leads to versicolorin A (VERA). A branch point starts from VERB since it can also be converted to dihydrodemethylsterigmatocystin (DMDHST), probably also by aflL, VERA being a precursor for aflatoxins B1 and G1, and DMDHST for aflatoxins B2 and G2. Next, the versicolorin reductase aflM and the cytochrome P450 monooxygenase aflN are involved in conversion of VERA to demethylsterigmatocystin (DMST). AflX and aflY seem also involved in this step, through probable aflX-mediated epoxide ring-opening step following versicolorin A oxidation and aflY-mediated Baeyer-Villiger oxidation required for the formation of the xanthone ring. The methyltransferase aflO then leads to the modification of DMST to sterigmatocystin (ST), and of DMDHST to dihydrosterigmatocystin (DHST). Both ST and DHST are then substrates of the O-methyltransferase aflP to yield O-methylsterigmatocystin (OMST) and dihydro-O-methylsterigmatocystin (DHOMST), respectively. Finally OMST is converted to aflatoxins B1 and G1, and DHOMST to aflatoxins B2 and G2, via the action of several enzymes including O-methylsterigmatocystin oxidoreductase aflQ, the cytochrome P450 monooxygenase aflU, but also the NADH-dependent flavin oxidoreductase nadA which is specifically required for the synthesis of AFG1. This chain is NADH-dependent flavin oxidoreductase nadA, found in Aspergillus parasiticus (strain ATCC 56775 / NRRL 5862 / SRRC 143 / SU-1).